A 416-amino-acid chain; its full sequence is Tyrosine--tRNA ligase (416 aa).

Tyrosine 41 serves as a coordination point for L-tyrosine. The 'HIGH' region motif lies at 46–55 (ATASSLHAGH). Tyrosine 175 and glutamine 179 together coordinate L-tyrosine. Positions 235 to 239 (KMGKT) match the 'KMSKS' region motif. Lysine 238 serves as a coordination point for ATP. The S4 RNA-binding domain maps to 349 to 416 (LPVAKAFVDA…KKKHVLLKPV (68 aa)).

This sequence belongs to the class-I aminoacyl-tRNA synthetase family. TyrS type 1 subfamily. Homodimer.

It localises to the cytoplasm. The catalysed reaction is tRNA(Tyr) + L-tyrosine + ATP = L-tyrosyl-tRNA(Tyr) + AMP + diphosphate + H(+). Its function is as follows. Catalyzes the attachment of tyrosine to tRNA(Tyr) in a two-step reaction: tyrosine is first activated by ATP to form Tyr-AMP and then transferred to the acceptor end of tRNA(Tyr). In Xanthobacter autotrophicus (strain ATCC BAA-1158 / Py2), this protein is Tyrosine--tRNA ligase.